Consider the following 184-residue polypeptide: Probable RNA 2'-phosphotransferase (184 aa).

This sequence belongs to the KptA/TPT1 family.

Its function is as follows. Removes the 2'-phosphate from RNA via an intermediate in which the phosphate is ADP-ribosylated by NAD followed by a presumed transesterification to release the RNA and generate ADP-ribose 1''-2''-cyclic phosphate (APPR&gt;P). May function as an ADP-ribosylase. In Escherichia coli O8 (strain IAI1), this protein is Probable RNA 2'-phosphotransferase.